We begin with the raw amino-acid sequence, 66 residues long: Large ribosomal subunit protein uL30 (66 aa).

It belongs to the universal ribosomal protein uL30 family. Part of the 50S ribosomal subunit.

The chain is Large ribosomal subunit protein uL30 from Chelativorans sp. (strain BNC1).